The chain runs to 207 residues: Ribosomal RNA small subunit methyltransferase G (207 aa).

S-adenosyl-L-methionine-binding positions include glycine 73, leucine 78, 124–125 (VE), and arginine 139.

Belongs to the methyltransferase superfamily. RNA methyltransferase RsmG family.

It is found in the cytoplasm. The catalysed reaction is guanosine(527) in 16S rRNA + S-adenosyl-L-methionine = N(7)-methylguanosine(527) in 16S rRNA + S-adenosyl-L-homocysteine. Specifically methylates the N7 position of guanine in position 527 of 16S rRNA. The protein is Ribosomal RNA small subunit methyltransferase G of Shigella dysenteriae serotype 1 (strain Sd197).